Reading from the N-terminus, the 163-residue chain is Photosystem II extrinsic protein V (163 aa).

The first 26 residues, 1–26, serve as a signal peptide directing secretion; sequence MFRRLIGVVVATVLLTFQLIVGSATA. 4 residues coordinate heme c: Cys63, Cys66, His67, and His118.

The protein belongs to the cytochrome c family. PsbV subfamily. As to quaternary structure, PSII is composed of 1 copy each of membrane proteins PsbA, PsbB, PsbC, PsbD, PsbE, PsbF, PsbH, PsbI, PsbJ, PsbK, PsbL, PsbM, PsbT, PsbX, PsbY, PsbZ, Psb30/Ycf12, peripheral proteins PsbO, CyanoQ (PsbQ), PsbU, PsbV and a large number of cofactors. It forms dimeric complexes. Heme c serves as cofactor.

It localises to the cellular thylakoid membrane. Functionally, one of the extrinsic, lumenal subunits of photosystem II (PSII). PSII is a light-driven water plastoquinone oxidoreductase, using light energy to abstract electrons from H(2)O, generating a proton gradient subsequently used for ATP formation. The extrinsic proteins stabilize the structure of photosystem II oxygen-evolving complex (OEC), the ion environment of oxygen evolution and protect the OEC against heat-induced inactivation. Low-potential cytochrome c that plays a role in the OEC of PSII. The sequence is that of Photosystem II extrinsic protein V from Trichormus variabilis (strain ATCC 29413 / PCC 7937) (Anabaena variabilis).